The sequence spans 181 residues: MTGGLRDGEKEEEFLHSPFIRKQGNIYKPYNKDMDYDILNEKSMEDVHTKEIDLVNRDPTHLNDDVVKVDFEDVIAEPAGTYSFDGVWKASFTTFTVTKYWCYRLLTALVGIPLALIWGIFFAILSFIHIWAVVPCVKSYLIEIHCISRVYSICVHTFCDPLFEAMGKCLGGVRIRTSKEV.

At 1–107 (MTGGLRDGEK…TKYWCYRLLT (107 aa)) the chain is on the cytoplasmic side. Positions 108–128 (ALVGIPLALIWGIFFAILSFI) form an intramembrane region, helical. At 129-181 (HIWAVVPCVKSYLIEIHCISRVYSICVHTFCDPLFEAMGKCLGGVRIRTSKEV) the chain is on the cytoplasmic side. 3 S-palmitoyl cysteine lipidation sites follow: cysteine 136, cysteine 146, and cysteine 159.

It belongs to the caveolin family. In terms of assembly, homooligomer.

The protein localises to the golgi apparatus membrane. Its subcellular location is the cell membrane. It localises to the membrane. The protein resides in the caveola. It is found in the membrane raft. Functionally, may act as a positive regulator of T-cell coactivation. May act as a scaffolding protein within caveolar membranes. Interacts directly with G-protein alpha subunits and can functionally regulate their activity. The polypeptide is Caveolin-1 (cav1) (Takifugu rubripes (Japanese pufferfish)).